The primary structure comprises 276 residues: NADPH-dependent 7-cyano-7-deazaguanine reductase (276 aa).

Substrate is bound at residue 83–85 (IES). 85 to 86 (SK) contributes to the NADPH binding site. Catalysis depends on Cys184, which acts as the Thioimide intermediate. Asp191 (proton donor) is an active-site residue. Position 223 to 224 (223 to 224 (HE)) interacts with substrate. Residue 252-253 (RG) coordinates NADPH.

This sequence belongs to the GTP cyclohydrolase I family. QueF type 2 subfamily. Homodimer.

The protein localises to the cytoplasm. The catalysed reaction is 7-aminomethyl-7-carbaguanine + 2 NADP(+) = 7-cyano-7-deazaguanine + 2 NADPH + 3 H(+). It functions in the pathway tRNA modification; tRNA-queuosine biosynthesis. Functionally, catalyzes the NADPH-dependent reduction of 7-cyano-7-deazaguanine (preQ0) to 7-aminomethyl-7-deazaguanine (preQ1). The chain is NADPH-dependent 7-cyano-7-deazaguanine reductase from Pseudomonas aeruginosa (strain LESB58).